We begin with the raw amino-acid sequence, 101 residues long: Small ribosomal subunit protein uS14A (101 aa).

The tract at residues L31–D67 is disordered. Basic and acidic residues predominate over residues E38–R53.

It belongs to the universal ribosomal protein uS14 family. As to quaternary structure, part of the 30S ribosomal subunit. Contacts proteins S3 and S10.

Binds 16S rRNA, required for the assembly of 30S particles and may also be responsible for determining the conformation of the 16S rRNA at the A site. In Streptomyces coelicolor (strain ATCC BAA-471 / A3(2) / M145), this protein is Small ribosomal subunit protein uS14A.